A 299-amino-acid chain; its full sequence is Cold shock protein 1 (299 aa).

Residue A2 is modified to N-acetylalanine. Residues 12-76 (TGKVNWFNAS…GKTKAVNVTA (65 aa)) form the CSD domain. The disordered stretch occupies residues 76-97 (APGGGSLKKENNSRGNGARRGG). 7 consecutive CCHC-type zinc fingers follow at residues 100–117 (SGCY…DCGI), 132–149 (EGCY…DCTS), 164–181 (DGCY…DCTQ), 198–215 (DGCY…DCTQ), 230–247 (GTCY…DCAT), 253–270 (RGCY…DCDQ), and 280–297 (NACY…ECSS).

Belongs to the cold shock protein (CSP) family. In terms of tissue distribution, mostly expressed in shoot apices and siliques, and, to a lower extent, in roots, cotyledons, stems, shoots, leaves, floral buds and flowers.

It is found in the nucleus. Its subcellular location is the cytoplasm. Its function is as follows. Chaperone that binds to RNA, single- (ssDNA) and double-stranded (dsDNA) DNA, and unwinds nucleic acid duplex. Exhibits a DNA melting activity. May be involved in cold resistance. Prevents seed germination under dehydration or salt stress conditions. In Arabidopsis thaliana (Mouse-ear cress), this protein is Cold shock protein 1 (CSP1).